Here is a 534-residue protein sequence, read N- to C-terminus: Unguisins hydrolase ungD' (534 aa).

The protein belongs to the peptidase S12 family.

The protein operates within secondary metabolite biosynthesis. Its function is as follows. Hydrolase; part of the gene cluster that mediates the biosynthesis of the unguisins, gamma-aminobutyric acid (GABA)-containing fungal cyclic heptapeptides with the amino acid sequence cyclo-(D-Ala1-D-Val2-L-Leu3-beta-MePhe4-D-Ala5-D-Trp6-GABA7) for unguisin H and cyclo-(D-Ala1-D-Ala2-L-Leu3-beta-MePhe4-D-Ala5-D-Trp6-GABA7) for unguisin I. Within the pathway, the hydrolase ungD' catalyzes the hydrolysis between the D-tryptophan and GABA residues of unguisins H and I to produce the corresponding linear peptides. The alanine racemase ungC' catalyzes the interconversion of L-alanine and D-alanine, providing the D-alanine which is accepted by the first adenylation domain of the nonribosomal peptide synthetase (NRPS) ungA', whereas the methyltransferase ungE' provides the (2R,3R)-beta-methylphenylalanine residue incorporated by the module 4. UngA' is the main enzyme within the cluster which condenses the 7 residues using its respective 7 modules. The terminal condensation domain (Ct) is involved in cyclization with D-alanine and thereby releasing of unguisins H and I. The protein is Unguisins hydrolase ungD' of Aspergillus campestris (strain IBT 28561).